The sequence spans 273 residues: LOB domain-containing protein 20 (273 aa).

A compositionally biased stretch (basic and acidic residues) spans 1-15; sequence MADQQRGHNTSDSRR. Residues 1–39 are disordered; sequence MADQQRGHNTSDSRRKSLAGKRTSQQTPTSSLSSGGVSM. A compositionally biased stretch (low complexity) spans 23-39; that stretch reads TSQQTPTSSLSSGGVSM. Residues 50–152 enclose the LOB domain; the sequence is SPCGACKFLR…AELSVVQSQL (103 aa). The tract at residues 221-248 is disordered; it reads LEHSLQPMPPHQQRRGDYQHEDEEESGA.

This sequence belongs to the LOB domain-containing protein family. As to expression, expressed in roots and flowers.

The protein is LOB domain-containing protein 20 (LBD20) of Arabidopsis thaliana (Mouse-ear cress).